We begin with the raw amino-acid sequence, 180 residues long: Large ribosomal subunit protein uL6 (180 aa).

It belongs to the universal ribosomal protein uL6 family. As to quaternary structure, part of the 50S ribosomal subunit.

Functionally, this protein binds to the 23S rRNA, and is important in its secondary structure. It is located near the subunit interface in the base of the L7/L12 stalk, and near the tRNA binding site of the peptidyltransferase center. This is Large ribosomal subunit protein uL6 from Borrelia garinii subsp. bavariensis (strain ATCC BAA-2496 / DSM 23469 / PBi) (Borreliella bavariensis).